Reading from the N-terminus, the 158-residue chain is Retinoic acid receptor beta (158 aa).

The segment covering R1 to V18 has biased composition (low complexity). The interval R1–P24 is disordered. Positions Y31–N106 form a DNA-binding region, nuclear receptor. 2 NR C4-type zinc fingers span residues C34–C54 and C70–C94. One can recognise an NR LBD domain in the interval E129–S158.

The protein belongs to the nuclear hormone receptor family. NR1 subfamily. Heterodimer; with a RXR molecule. Binds DNA preferentially as a RAR/RXR heterodimer.

It localises to the nucleus. Receptor for retinoic acid. Retinoic acid receptors bind as heterodimers to their target response elements in response to their ligands, all-trans or 9-cis retinoic acid, and regulate gene expression in various biological processes. The RAR/RXR heterodimers bind to the retinoic acid response elements (RARE) composed of tandem 5'-AGGTCA-3' sites known as DR1-DR5. This chain is Retinoic acid receptor beta (RARB), found in Notophthalmus viridescens (Eastern newt).